A 147-amino-acid polypeptide reads, in one-letter code: D-aminoacyl-tRNA deacylase (147 aa).

A Gly-cisPro motif, important for rejection of L-amino acids motif is present at residues 137–138 (GP).

This sequence belongs to the DTD family. Homodimer.

The protein resides in the cytoplasm. The catalysed reaction is glycyl-tRNA(Ala) + H2O = tRNA(Ala) + glycine + H(+). It catalyses the reaction a D-aminoacyl-tRNA + H2O = a tRNA + a D-alpha-amino acid + H(+). Its function is as follows. An aminoacyl-tRNA editing enzyme that deacylates mischarged D-aminoacyl-tRNAs. Also deacylates mischarged glycyl-tRNA(Ala), protecting cells against glycine mischarging by AlaRS. Acts via tRNA-based rather than protein-based catalysis; rejects L-amino acids rather than detecting D-amino acids in the active site. By recycling D-aminoacyl-tRNA to D-amino acids and free tRNA molecules, this enzyme counteracts the toxicity associated with the formation of D-aminoacyl-tRNA entities in vivo and helps enforce protein L-homochirality. This is D-aminoacyl-tRNA deacylase from Acinetobacter baumannii (strain ATCC 17978 / DSM 105126 / CIP 53.77 / LMG 1025 / NCDC KC755 / 5377).